Here is a 63-residue protein sequence, read N- to C-terminus: Large ribosomal subunit protein eL29 (63 aa).

Positions 1 to 26 (MAKSKNHTAHNQTRKAHRNGIKKPKT) are enriched in basic residues. Positions 1–35 (MAKSKNHTAHNQTRKAHRNGIKKPKTYKYPSLKGV) are disordered.

Belongs to the eukaryotic ribosomal protein eL29 family. As to quaternary structure, component of the large ribosomal subunit. Mature ribosomes consist of a small (40S) and a large (60S) subunit. The 40S subunit contains about 32 different proteins and 1 molecule of RNA (18S). The 60S subunit contains 45 different proteins and 3 molecules of RNA (25S, 5.8S and 5S).

It localises to the cytoplasm. Functionally, component of the ribosome, a large ribonucleoprotein complex responsible for the synthesis of proteins in the cell. The small ribosomal subunit (SSU) binds messenger RNAs (mRNAs) and translates the encoded message by selecting cognate aminoacyl-transfer RNA (tRNA) molecules. The large subunit (LSU) contains the ribosomal catalytic site termed the peptidyl transferase center (PTC), which catalyzes the formation of peptide bonds, thereby polymerizing the amino acids delivered by tRNAs into a polypeptide chain. The nascent polypeptides leave the ribosome through a tunnel in the LSU and interact with protein factors that function in enzymatic processing, targeting, and the membrane insertion of nascent chains at the exit of the ribosomal tunnel. This chain is Large ribosomal subunit protein eL29, found in Candida albicans (strain SC5314 / ATCC MYA-2876) (Yeast).